A 427-amino-acid chain; its full sequence is Phosphoribosylamine--glycine ligase (427 aa).

Positions 107–312 (KDLCARFNIP…LLALVNAAVD (206 aa)) constitute an ATP-grasp domain. Position 133 to 193 (133 to 193 (IRQQGAPIVV…EEFLDGEEAS (61 aa))) interacts with ATP. Positions 282 and 284 each coordinate Mg(2+).

Belongs to the GARS family. Mg(2+) serves as cofactor. The cofactor is Mn(2+).

The catalysed reaction is 5-phospho-beta-D-ribosylamine + glycine + ATP = N(1)-(5-phospho-beta-D-ribosyl)glycinamide + ADP + phosphate + H(+). Its pathway is purine metabolism; IMP biosynthesis via de novo pathway; N(1)-(5-phospho-D-ribosyl)glycinamide from 5-phospho-alpha-D-ribose 1-diphosphate: step 2/2. This is Phosphoribosylamine--glycine ligase from Brucella melitensis biotype 1 (strain ATCC 23456 / CCUG 17765 / NCTC 10094 / 16M).